The following is a 284-amino-acid chain: 2-dehydro-3-deoxyphosphooctonate aldolase (284 aa).

Belongs to the KdsA family.

It is found in the cytoplasm. The catalysed reaction is D-arabinose 5-phosphate + phosphoenolpyruvate + H2O = 3-deoxy-alpha-D-manno-2-octulosonate-8-phosphate + phosphate. It functions in the pathway carbohydrate biosynthesis; 3-deoxy-D-manno-octulosonate biosynthesis; 3-deoxy-D-manno-octulosonate from D-ribulose 5-phosphate: step 2/3. Its pathway is bacterial outer membrane biogenesis; lipopolysaccharide biosynthesis. This Burkholderia multivorans (strain ATCC 17616 / 249) protein is 2-dehydro-3-deoxyphosphooctonate aldolase.